We begin with the raw amino-acid sequence, 238 residues long: ATP synthase subunit a (238 aa).

5 helical membrane-spanning segments follow: residues 16–36 (LIWL…TVLF), 79–99 (GLFM…FFPV), 103–123 (FVFG…SSLL), 129–149 (GLMS…MVVV), and 209–229 (VFGA…CVLL).

Belongs to the ATPase A chain family. As to quaternary structure, F-type ATPases have 2 components, CF(1) - the catalytic core - and CF(0) - the membrane proton channel. CF(1) has five subunits: alpha(3), beta(3), gamma(1), delta(1), epsilon(1). CF(0) has three main subunits: a, b and c.

It is found in the mitochondrion inner membrane. Its function is as follows. Mitochondrial membrane ATP synthase (F(1)F(0) ATP synthase or Complex V) produces ATP from ADP in the presence of a proton gradient across the membrane which is generated by electron transport complexes of the respiratory chain. F-type ATPases consist of two structural domains, F(1) - containing the extramembraneous catalytic core and F(0) - containing the membrane proton channel, linked together by a central stalk and a peripheral stalk. During catalysis, ATP synthesis in the catalytic domain of F(1) is coupled via a rotary mechanism of the central stalk subunits to proton translocation. Key component of the proton channel; it may play a direct role in the translocation of protons across the membrane. The protein is ATP synthase subunit a (ATP6) of Mytilus edulis (Blue mussel).